Consider the following 1182-residue polypeptide: MAQLLFRKTTQDFRDCFGLKHEILASIYNEKSTFSSENGSIQILEEAEVNALGELVRDGTVAISFGPGIYSRMFSHLRDDSDYRSALTDCVAHGWKQTRDARDVREWQRSAAIMCAERYMYKVRQAYKRVVENLDHMYAWHYLTEGPSEHVFILPAMYESVRHETTSEAYGMQCGGIIGGNVSLMLPRDEQYTTLFKAWLMSLAKMSLSELREPHWNGVRVQLSRDHRILYYGDLLPSDGDITYLVNKLEYHTIWFPEGDFETMMGAMLRDSFPAGCHAHLNIPVPHYFVFDTDDDLILRCWKGVRDTWIKLRLGYEEGGVNDSRMSEALIVNRDLPADLSESLFCCCLARGVSRDQVRTLKDVRNVAQAQIRHVVSGQGVWWEHMVRGQPLACSIRPGKVVLVVDYEDGPLHVSIRVRLLNVHYARELGMKASDVVVRIPTSNRPRWVETKEYERSLRFYEFRPGPITTEFHHVFAFYCYWGCGRVEKRRHLYQIREVRRGNLYSRSRFLRRIAEDGEKVKVQGRTHVTATRAVQHEKCNPNEDIIYSREFARELALTGKIKEAGALAVIYTCMQTLGVDIDPPAGWVREGRPKQRTAKLCHLLTRILTAFFSYRGGSSSLVCSVMVVIFSIILYYLRLKHVDQEVRYDELTLIWYGDGGVELQRILREVSMTRFVAVAGDPATPEYIAQAKLWANKKSNIVVFNYARPYERGPVFENLIRDTVSLREAAEVFILRTDDSWSQYGNTVVAMLGEGDFCDLVHFGASCDPMEHYFVHISQPPGTNPGYEPANQEEPFEEWLYETQAMERVIPTTWESEIVDARGMLVSILTFHFRFAGWFELDVPGDDIGRGLQLMGSINKVVHVSCFVQNGRRYFRLSVDLDVDRVLRNMRHEGDALMAAELFVTDAVLVCEGLVVGEMHRLQRTYRSVNAMVYHQGMTNFIVYEWMRRVLLTNLLDEMLVFDIGGRNGELSGWVVQDVKVHYFCVDPAGEEAIPKGQRVRLPGGRAIWDIAETVEQNVARYLEVVGKPQTPAEGIILIFSNSIVAAYEAAGRNNRNQVANLYQQLQAWGGRVFIRDQLVPTRANPGDYWIQAAFPGNVYPPGLCEDFNIDPDAGILPLRYPDTGQGATDVVLANGRLGHLTSSWFQSLYCGAARGFILNGFGRLIWPIYCRHVVVLATRP.

Residues 618 to 638 form a helical membrane-spanning segment; the sequence is GSSSLVCSVMVVIFSIILYYL.

The protein localises to the host membrane. This is an uncharacterized protein from Callospermophilus lateralis (Golden-mantled ground squirrel).